Consider the following 264-residue polypeptide: MAAPGEALTPQGYIQHHLTNLHVGEGFWTWHIDSLFFSVGLGVLFLWIFRSVGKKATSGVPGKLQCFIEMIVEFVDNSVKESFHGRNALIAPLALTIFVWVFMMNFMDMLPVDWLPWLASLAGVPYLKVVPTTDVNITFSLAIGVFVLIIYYSIKVKGVSGFVKELTLQPFNHKAMIPVNLLLETVTLVAKPISLALRLFGNLYAGELIFILIALMYGTNLLLSSLGVTLQLGWLIFHILVITLQAFIFMMLTIVYLSMAHEDH.

Helical transmembrane passes span 29–49, 87–107, 134–154, 177–197, 208–228, and 235–255; these read TWHIDSLFFSVGLGVLFLWIF, NALIAPLALTIFVWVFMMNFM, DVNITFSLAIGVFVLIIYYSI, IPVNLLLETVTLVAKPISLAL, LIFILIALMYGTNLLLSSLGV, and LIFHILVITLQAFIFMMLTIV.

Belongs to the ATPase A chain family. As to quaternary structure, F-type ATPases have 2 components, CF(1) - the catalytic core - and CF(0) - the membrane proton channel. CF(1) has five subunits: alpha(3), beta(3), gamma(1), delta(1), epsilon(1). CF(0) has three main subunits: a(1), b(2) and c(9-12). The alpha and beta chains form an alternating ring which encloses part of the gamma chain. CF(1) is attached to CF(0) by a central stalk formed by the gamma and epsilon chains, while a peripheral stalk is formed by the delta and b chains.

It localises to the cell inner membrane. In terms of biological role, key component of the proton channel; it plays a direct role in the translocation of protons across the membrane. This Shewanella sp. (strain ANA-3) protein is ATP synthase subunit a.